The chain runs to 84 residues: U4-theraphotoxin-Hhn1ac (84 aa).

Positions 1-22 (MKVTLIAILTCAAVLVLHTTAA) are cleaved as a signal peptide. The propeptide occupies 23–47 (EELEESQLMEVGMPDTELAAVDEER). 3 disulfides stabilise this stretch: cysteine 51–cysteine 65, cysteine 55–cysteine 76, and cysteine 70–cysteine 81.

The protein belongs to the neurotoxin 12 (Hwtx-2) family. 02 (Hwtx-2) subfamily. As to expression, expressed by the venom gland.

It localises to the secreted. In terms of biological role, postsynaptic neurotoxin. The polypeptide is U4-theraphotoxin-Hhn1ac (Cyriopagopus hainanus (Chinese bird spider)).